Consider the following 79-residue polypeptide: Protein RALF-like 35 (79 aa).

An N-terminal signal peptide occupies residues 1–29 (MAAHKMSLTSLFFVSIVIVLSLFSGFGEG). 2 cysteine pairs are disulfide-bonded: Cys45–Cys52 and Cys66–Cys72. N-linked (GlcNAc...) asparagine glycosylation is present at Asn68.

Belongs to the plant rapid alkalinization factor (RALF) family.

It is found in the secreted. In terms of biological role, cell signaling peptide that may regulate plant stress, growth, and development. Mediates a rapid alkalinization of extracellular space by mediating a transient increase in the cytoplasmic Ca(2+) concentration leading to a calcium-dependent signaling events through a cell surface receptor and a concomitant activation of some intracellular mitogen-activated protein kinases. This chain is Protein RALF-like 35, found in Arabidopsis thaliana (Mouse-ear cress).